The sequence spans 355 residues: Probable L-aspartate decarboxylase (355 aa).

K210 is subject to N6-(pyridoxal phosphate)lysine.

It belongs to the group II decarboxylase family. MfnA subfamily. Pyridoxal 5'-phosphate is required as a cofactor.

It catalyses the reaction L-aspartate + H(+) = beta-alanine + CO2. It functions in the pathway cofactor biosynthesis; coenzyme A biosynthesis. Catalyzes the decarboxylation of L-aspartate to produce beta-alanine. This Halobacterium salinarum (strain ATCC 29341 / DSM 671 / R1) protein is Probable L-aspartate decarboxylase.